The primary structure comprises 165 residues: Methylated-DNA--protein-cysteine methyltransferase (165 aa).

The Nucleophile; methyl group acceptor role is filled by Cys-126.

This sequence belongs to the MGMT family.

The protein resides in the cytoplasm. It carries out the reaction a 6-O-methyl-2'-deoxyguanosine in DNA + L-cysteinyl-[protein] = S-methyl-L-cysteinyl-[protein] + a 2'-deoxyguanosine in DNA. The enzyme catalyses a 4-O-methyl-thymidine in DNA + L-cysteinyl-[protein] = a thymidine in DNA + S-methyl-L-cysteinyl-[protein]. In terms of biological role, involved in the cellular defense against the biological effects of O6-methylguanine (O6-MeG) and O4-methylthymine (O4-MeT) in DNA. Repairs the methylated nucleobase in DNA by stoichiometrically transferring the methyl group to a cysteine residue in the enzyme. This is a suicide reaction: the enzyme is irreversibly inactivated. The chain is Methylated-DNA--protein-cysteine methyltransferase from Mycobacterium leprae (strain TN).